The chain runs to 227 residues: Ribonuclease 3 (227 aa).

Residues 6–128 (ASDYQQRIGY…VIAAIYLDAD (123 aa)) enclose the RNase III domain. Residue glutamate 41 participates in Mg(2+) binding. Aspartate 45 is a catalytic residue. Residues aspartate 114 and glutamate 117 each coordinate Mg(2+). Residue glutamate 117 is part of the active site. Residues 155–225 (DPKTRLQEWL…ASHAIDQLDS (71 aa)) enclose the DRBM domain. The segment covering 203 to 212 (GEGSSRRLAE) has biased composition (basic and acidic residues). Residues 203-227 (GEGSSRRLAEQDAASHAIDQLDSNK) are disordered.

It belongs to the ribonuclease III family. In terms of assembly, homodimer. Mg(2+) is required as a cofactor.

The protein localises to the cytoplasm. It carries out the reaction Endonucleolytic cleavage to 5'-phosphomonoester.. In terms of biological role, digests double-stranded RNA. Involved in the processing of primary rRNA transcript to yield the immediate precursors to the large and small rRNAs (23S and 16S). Processes some mRNAs, and tRNAs when they are encoded in the rRNA operon. Processes pre-crRNA and tracrRNA of type II CRISPR loci if present in the organism. This chain is Ribonuclease 3, found in Xylella fastidiosa (strain M23).